The following is a 259-amino-acid chain: MGKIQLGYWILVLFIVTWSDLGLCKKPKPRPGGGWNSGGSNRYPGQPGSPGGNRYPGWGHPQGGGTNWGQPHPGGSNWGQPHPGGSSWGQPHGGSNWGQGGYNKWKPDKPKTNLKHVAGAAAAGAVVGGLGGYMLGSAMSRPVIHFGNEYEDRYYRENQYRYPNQVMYRPIDQYSSQNNFVHDCVNITVKQHTTTTTTKGENFTETDIKIMERVVEQMCITQYQAEYEAAAQRAYNMAFFSAPPVTLLFLSFLIFLIVS.

A signal peptide spans 1 to 24; the sequence is MGKIQLGYWILVLFIVTWSDLGLC. The interval 25 to 235 is interaction with GRB2, ERI3 and SYN1; that stretch reads KKPKPRPGGG…EYEAAAQRAY (211 aa). Residues 29–110 are disordered; it reads PRPGGGWNSG…GYNKWKPDKP (82 aa). Glycine 63, glycine 64, histidine 72, glycine 74, histidine 82, glycine 84, histidine 92, and glycine 94 together coordinate Cu(2+). Over residues 91–101 the composition is skewed to gly residues; sequence PHGGSNWGQGG. Cysteine 184 and cysteine 219 are disulfide-bonded. Asparagine 186 and asparagine 202 each carry an N-linked (GlcNAc...) asparagine glycan. A lipid anchor (GPI-anchor amidated asparagine) is attached at asparagine 236. Residues 237-259 constitute a propeptide, removed in mature form; it reads MAFFSAPPVTLLFLSFLIFLIVS.

Belongs to the prion family. As to quaternary structure, monomer and homodimer. Has a tendency to aggregate into amyloid fibrils containing a cross-beta spine, formed by a steric zipper of superposed beta-strands. Soluble oligomers may represent an intermediate stage on the path to fibril formation. Copper binding may promote oligomerization. Interacts with GRB2, APP, ERI3/PRNPIP and SYN1. Mislocalized cytosolically exposed PrP interacts with MGRN1; this interaction alters MGRN1 subcellular location and causes lysosomal enlargement. Interacts with KIAA1191.

The protein localises to the cell membrane. It localises to the golgi apparatus. Its function is as follows. Its primary physiological function is unclear. Has cytoprotective activity against internal or environmental stresses. May play a role in neuronal development and synaptic plasticity. May be required for neuronal myelin sheath maintenance. May play a role in iron uptake and iron homeostasis. Soluble oligomers are toxic to cultured neuroblastoma cells and induce apoptosis (in vitro). Association with GPC1 (via its heparan sulfate chains) targets PRNP to lipid rafts. Also provides Cu(2+) or Zn(2+) for the ascorbate-mediated GPC1 deaminase degradation of its heparan sulfate side chains. In Trichosurus vulpecula (Brush-tailed possum), this protein is Major prion protein (PRNP).